The chain runs to 453 residues: Na(+)/H(+) antiporter NhaA 2 (453 aa).

12 consecutive transmembrane segments (helical) span residues 23-43 (FLHIEAVSGIVLLIAAVAALI), 74-94 (LHFWINDGLMTIFFLVVGMEI), 111-131 (LPMAAAVGGVAVPALLYLSFG), 139-159 (GWAVPTATDIAFAVGVLALLG), 168-188 (VFLLALAIIDDIIAVLIIAFF), 191-211 (GGLDYTGFGVALIGLLMVIGL), 214-234 (IGVGSAYAYVLPGAIVWLGIL), 235-255 (LTGAHPTLAGVVLGLMTPVTA), 316-336 (VAFGIMPVFALANAGVSLSGV), 345-365 (WVMIAVAVALVAGKPLGIVSV), 386-406 (IVLVGLLAGIGFTMSIFIANL), and 419-439 (LGVLSASLIAAVLGLTWGVWS).

The protein belongs to the NhaA Na(+)/H(+) (TC 2.A.33) antiporter family.

It localises to the cell inner membrane. It catalyses the reaction Na(+)(in) + 2 H(+)(out) = Na(+)(out) + 2 H(+)(in). Its function is as follows. Na(+)/H(+) antiporter that extrudes sodium in exchange for external protons. This Pseudomonas putida (strain ATCC 700007 / DSM 6899 / JCM 31910 / BCRC 17059 / LMG 24140 / F1) protein is Na(+)/H(+) antiporter NhaA 2.